A 302-amino-acid chain; its full sequence is Oxygen-dependent coproporphyrinogen-III oxidase (302 aa).

Ser94 is a binding site for substrate. Residues His98 and His108 each contribute to the a divalent metal cation site. The Proton donor role is filled by His108. 110–112 (NVR) provides a ligand contact to substrate. His147 and His177 together coordinate a divalent metal cation. The tract at residues 242 to 277 (YVEFNLVYDRGTIFGLQSGGRTESILMSLPPLVRWD) is important for dimerization. 260 to 262 (GGR) contacts substrate.

The protein belongs to the aerobic coproporphyrinogen-III oxidase family. Homodimer. The cofactor is a divalent metal cation.

It is found in the cytoplasm. It catalyses the reaction coproporphyrinogen III + O2 + 2 H(+) = protoporphyrinogen IX + 2 CO2 + 2 H2O. Its pathway is porphyrin-containing compound metabolism; protoporphyrin-IX biosynthesis; protoporphyrinogen-IX from coproporphyrinogen-III (O2 route): step 1/1. In terms of biological role, involved in the heme biosynthesis. Catalyzes the aerobic oxidative decarboxylation of propionate groups of rings A and B of coproporphyrinogen-III to yield the vinyl groups in protoporphyrinogen-IX. This Alcanivorax borkumensis (strain ATCC 700651 / DSM 11573 / NCIMB 13689 / SK2) protein is Oxygen-dependent coproporphyrinogen-III oxidase.